The following is a 432-amino-acid chain: Uracil permease (432 aa).

The next 12 membrane-spanning stretches (helical) occupy residues 25–45 (LFAM…DPSI), 65–85 (VPAY…AKTA), 89–109 (GAAM…ALII), 124–144 (VVVG…AVGM), 155–175 (LLHF…SVLA), 181–201 (LIPV…VGLV), 206–226 (VAAA…DYPV), 228–248 (VTWE…SEHI), 305–325 (VYSV…GFVG), 330–350 (LISS…FGII), 370–390 (NLVI…LKIS), and 393–413 (FQIT…LILP).

The protein belongs to the nucleobase:cation symporter-2 (NCS2) (TC 2.A.40) family.

It is found in the cell membrane. In terms of biological role, transport of uracil in the cell. The polypeptide is Uracil permease (pyrP) (Bacillus caldolyticus).